Reading from the N-terminus, the 187-residue chain is Ubiquinol-cytochrome c reductase iron-sulfur subunit (187 aa).

Residues 15–35 (LYYATAGAGAVATGAAVWPLI) traverse the membrane as a helical segment. The region spanning 89-185 (QLGQLVDTNA…AKFIDETTIQ (97 aa)) is the Rieske domain. Residues Cys129, His131, Cys149, and His152 each contribute to the [2Fe-2S] cluster site. Cys134 and Cys151 are oxidised to a cystine.

This sequence belongs to the Rieske iron-sulfur protein family. As to quaternary structure, the main subunits of complex b-c1 are: cytochrome b, cytochrome c1 and the Rieske protein. The cofactor is [2Fe-2S] cluster.

It localises to the cell membrane. The enzyme catalyses a quinol + 2 Fe(III)-[cytochrome c](out) = a quinone + 2 Fe(II)-[cytochrome c](out) + 2 H(+)(out). Functionally, component of the ubiquinol-cytochrome c reductase complex (complex III or cytochrome b-c1 complex), which is a respiratory chain that generates an electrochemical potential coupled to ATP synthesis. This chain is Ubiquinol-cytochrome c reductase iron-sulfur subunit (petA), found in Cereibacter sphaeroides (Rhodobacter sphaeroides).